The following is a 1272-amino-acid chain: Regulator of nonsense transcripts 2 (1272 aa).

Basic and acidic residues predominate over residues 1-114 (MPAERKKPAS…QEEQAKRQQE (114 aa)). Disordered regions lie at residues 1-126 (MPAE…EKEE), 370-389 (DHRE…HSKG), 423-445 (NMPD…DIFT), and 490-517 (CQNK…SPDD). The stretch at 54–134 (EDKKKRLEDD…EESIQLHQEA (81 aa)) forms a coiled coil. Residues 94-133 (KKKHQEEERKKQEEQAKRQQEEEAAAQMKEKEESIQLHQE) form a sufficient for interaction with UPF1 region. One can recognise an MIF4G 1 domain in the interval 168-431 (LKKNTAFVKK…ENMPDLPQDK (264 aa)). Basic and acidic residues-rich tracts occupy residues 428–439 (PQDKPTPEEHGP) and 490–513 (CQNK…KEVS). Residues 487–559 (EKSCQNKESN…EQEQEDEEAS (73 aa)) adopt a coiled-coil conformation. MIF4G domains lie at 569 to 758 (DAFL…CNPP) and 773 to 986 (EYVR…LRPK). Residues 711–928 (GRFLFRSPES…IRLVCTILDT (218 aa)) form a sufficient for interaction with UPF3A and UPF3B region. Positions 757-1272 (PPPAEKTVKK…LIFKTGGRRR (516 aa)) are sufficient for interaction with EIF4A1 and EIF1. Positions 839–859 (EDVGIHVVDGVLEDIRLGMEV) are binds to UPF3B. The segment at 1018 to 1098 (DSKDSMTEGE…DEENTEVMIK (81 aa)) is disordered. A compositionally biased stretch (acidic residues) spans 1027–1076 (ENLEEDEEEEEGGAETEEQSGNESEVNEPEEEEGSDNDDDEGEEEEEENT). Positions 1084–1272 (KENETDEENT…LIFKTGGRRR (189 aa)) are sufficient for interaction with UPF1 C-terminus. T1088 bears the Phosphothreonine mark. Interaction with UPF1 regions lie at residues 1105-1129 (VPCV…QQRS) and 1167-1207 (DTMP…AEQE). The necessary for interaction with UPF1 stretch occupies residues 1105-1198 (VPCVEDEDFI…PMSSQLAANH (94 aa)). The segment at 1220–1272 (NERQEQEDYQEMLQSLAQRPAPANTNRERRPRYQHPKGAPNADLIFKTGGRRR) is disordered.

As to quaternary structure, found in a post-splicing messenger ribonucleoprotein (mRNP) complex. Associates with the exon junction complex (EJC). Interacts with SMG1, EST1A, UPF1, UPF3A, UPF3B, EIF4A1 and EIF1. Ubiquitous.

Its subcellular location is the cytoplasm. The protein localises to the perinuclear region. In terms of biological role, involved in nonsense-mediated decay (NMD) of mRNAs containing premature stop codons by associating with the nuclear exon junction complex (EJC). Recruited by UPF3B associated with the EJC core at the cytoplasmic side of the nuclear envelope and the subsequent formation of an UPF1-UPF2-UPF3 surveillance complex (including UPF1 bound to release factors at the stalled ribosome) is believed to activate NMD. In cooperation with UPF3B stimulates both ATPase and RNA helicase activities of UPF1. Binds spliced mRNA. This is Regulator of nonsense transcripts 2 from Homo sapiens (Human).